Here is a 486-residue protein sequence, read N- to C-terminus: Cardiolipin synthase A (486 aa).

2 consecutive transmembrane segments (helical) span residues 3–23 and 38–58; these read IFYN…IANI and MSWL…WFFF. PLD phosphodiesterase domains are found at residues 219–246 and 399–426; these read VDVR…VDPY and QKGL…DMRS. Catalysis depends on residues His-224, Lys-226, Asp-231, His-404, Lys-406, and Asp-411.

The protein belongs to the phospholipase D family. Cardiolipin synthase subfamily. ClsA sub-subfamily.

Its subcellular location is the cell inner membrane. It carries out the reaction 2 a 1,2-diacyl-sn-glycero-3-phospho-(1'-sn-glycerol) = a cardiolipin + glycerol. Catalyzes the reversible phosphatidyl group transfer from one phosphatidylglycerol molecule to another to form cardiolipin (CL) (diphosphatidylglycerol) and glycerol. This chain is Cardiolipin synthase A, found in Buchnera aphidicola subsp. Acyrthosiphon pisum (strain APS) (Acyrthosiphon pisum symbiotic bacterium).